The following is a 185-amino-acid chain: Elongation factor P (185 aa).

It belongs to the elongation factor P family.

It localises to the cytoplasm. It functions in the pathway protein biosynthesis; polypeptide chain elongation. In terms of biological role, involved in peptide bond synthesis. Stimulates efficient translation and peptide-bond synthesis on native or reconstituted 70S ribosomes in vitro. Probably functions indirectly by altering the affinity of the ribosome for aminoacyl-tRNA, thus increasing their reactivity as acceptors for peptidyl transferase. This Nostoc punctiforme (strain ATCC 29133 / PCC 73102) protein is Elongation factor P.